Here is a 145-residue protein sequence, read N- to C-terminus: D-aminoacyl-tRNA deacylase (145 aa).

The short motif at 137-138 (GP) is the Gly-cisPro motif, important for rejection of L-amino acids element.

This sequence belongs to the DTD family. Homodimer.

Its subcellular location is the cytoplasm. The catalysed reaction is glycyl-tRNA(Ala) + H2O = tRNA(Ala) + glycine + H(+). The enzyme catalyses a D-aminoacyl-tRNA + H2O = a tRNA + a D-alpha-amino acid + H(+). Its function is as follows. An aminoacyl-tRNA editing enzyme that deacylates mischarged D-aminoacyl-tRNAs. Also deacylates mischarged glycyl-tRNA(Ala), protecting cells against glycine mischarging by AlaRS. Acts via tRNA-based rather than protein-based catalysis; rejects L-amino acids rather than detecting D-amino acids in the active site. By recycling D-aminoacyl-tRNA to D-amino acids and free tRNA molecules, this enzyme counteracts the toxicity associated with the formation of D-aminoacyl-tRNA entities in vivo and helps enforce protein L-homochirality. In Colwellia psychrerythraea (strain 34H / ATCC BAA-681) (Vibrio psychroerythus), this protein is D-aminoacyl-tRNA deacylase.